We begin with the raw amino-acid sequence, 256 residues long: uncharacterized protein (256 aa).

An NADP(+)-binding site is contributed by 9 to 33; the sequence is VTGGGQGIGAAIAQLFAENGMKVVI. Ser140 serves as a coordination point for substrate. Tyr153 functions as the Proton acceptor in the catalytic mechanism.

The protein belongs to the short-chain dehydrogenases/reductases (SDR) family.

This is an uncharacterized protein from Thermotoga maritima (strain ATCC 43589 / DSM 3109 / JCM 10099 / NBRC 100826 / MSB8).